The following is a 261-amino-acid chain: Cytochrome c oxidase subunit 3 (261 aa).

Residues 1–15 (MTRQTHAYHMVNPSP) are Mitochondrial matrix-facing. The helical transmembrane segment at 16–34 (WPLTGALSALLMTSGLIMW) threads the bilayer. Topologically, residues 35–40 (FHFNST) are mitochondrial intermembrane. The chain crosses the membrane as a helical span at residues 41–66 (ILLMLGLTTNMLTMYQWWRDVIREST). Residues 67 to 72 (FQGHHT) lie on the Mitochondrial matrix side of the membrane. The helical transmembrane segment at 73 to 105 (PNVQKGLRYGMILFIISEVLFFTGFFWAFYHSS) threads the bilayer. Residues 106-128 (LAPTPELGGCWPPTGIHPLNPLE) lie on the Mitochondrial intermembrane side of the membrane. Residues 129–152 (VPLLNTSVLLASGVSITWAHHSLM) form a helical membrane-spanning segment. The Mitochondrial matrix segment spans residues 153–155 (EGN). The chain crosses the membrane as a helical span at residues 156-183 (RNHMLQALFITIALGVYFTLLQASEYYE). At 184 to 190 (APFTISD) the chain is on the mitochondrial intermembrane side. A helical membrane pass occupies residues 191–223 (GVYGSTFFVATGFHGLHVIIGSTFLIVCFFRQL). Residues 224–232 (KFHFTSNHH) lie on the Mitochondrial matrix side of the membrane. Residues 233–256 (FGFEAAAWYWHFVDVVWLFLYVSI) traverse the membrane as a helical segment. Residues 257 to 261 (YWWGS) are Mitochondrial intermembrane-facing.

Belongs to the cytochrome c oxidase subunit 3 family. In terms of assembly, component of the cytochrome c oxidase (complex IV, CIV), a multisubunit enzyme composed of 14 subunits. The complex is composed of a catalytic core of 3 subunits MT-CO1, MT-CO2 and MT-CO3, encoded in the mitochondrial DNA, and 11 supernumerary subunits COX4I, COX5A, COX5B, COX6A, COX6B, COX6C, COX7A, COX7B, COX7C, COX8 and NDUFA4, which are encoded in the nuclear genome. The complex exists as a monomer or a dimer and forms supercomplexes (SCs) in the inner mitochondrial membrane with NADH-ubiquinone oxidoreductase (complex I, CI) and ubiquinol-cytochrome c oxidoreductase (cytochrome b-c1 complex, complex III, CIII), resulting in different assemblies (supercomplex SCI(1)III(2)IV(1) and megacomplex MCI(2)III(2)IV(2)).

The protein resides in the mitochondrion inner membrane. The enzyme catalyses 4 Fe(II)-[cytochrome c] + O2 + 8 H(+)(in) = 4 Fe(III)-[cytochrome c] + 2 H2O + 4 H(+)(out). Functionally, component of the cytochrome c oxidase, the last enzyme in the mitochondrial electron transport chain which drives oxidative phosphorylation. The respiratory chain contains 3 multisubunit complexes succinate dehydrogenase (complex II, CII), ubiquinol-cytochrome c oxidoreductase (cytochrome b-c1 complex, complex III, CIII) and cytochrome c oxidase (complex IV, CIV), that cooperate to transfer electrons derived from NADH and succinate to molecular oxygen, creating an electrochemical gradient over the inner membrane that drives transmembrane transport and the ATP synthase. Cytochrome c oxidase is the component of the respiratory chain that catalyzes the reduction of oxygen to water. Electrons originating from reduced cytochrome c in the intermembrane space (IMS) are transferred via the dinuclear copper A center (CU(A)) of subunit 2 and heme A of subunit 1 to the active site in subunit 1, a binuclear center (BNC) formed by heme A3 and copper B (CU(B)). The BNC reduces molecular oxygen to 2 water molecules using 4 electrons from cytochrome c in the IMS and 4 protons from the mitochondrial matrix. The sequence is that of Cytochrome c oxidase subunit 3 (MT-CO3) from Eudorcas rufifrons (Red-fronted gazelle).